The following is a 91-amino-acid chain: Mercuric transport protein periplasmic component (91 aa).

Positions 1–19 are cleaved as a signal peptide; the sequence is MKKLLSALALAAVVAPVWA. Positions 22 to 88 constitute an HMA domain; the sequence is QTVTLSVPGM…ATEDAGYPSS (67 aa). Hg(2+)-binding residues include Cys-33 and Cys-36.

This sequence belongs to the MerP family. In terms of assembly, monomer.

It localises to the periplasm. Functionally, involved in mercury resistance. Acts as a mercury scavenger that specifically binds to a mercuric ion in the periplasm and probably passes it to the cytoplasmic mercuric reductase MerA via the mercuric transport protein MerT. The chain is Mercuric transport protein periplasmic component from Pseudomonas fluorescens.